The chain runs to 161 residues: E3 ubiquitin ligase complex SCF subunit sconC (161 aa).

Residues isoleucine 102–arginine 161 form an interaction with the F-box domain of F-box proteins region.

This sequence belongs to the SKP1 family. As to quaternary structure, component of the SCF (SKP1-CUL1-F-box protein) E3 ubiquitin ligase complexes.

It participates in protein modification; protein ubiquitination. In terms of biological role, essential component of the SCF (SKP1-CUL1-F-box protein) E3 ubiquitin ligase complexes, which mediate the ubiquitination and subsequent proteasomal degradation of target proteins. Controls sulfur metabolite repression, probably by mediating the inactivation or degradation of the metR transcription factor. This is E3 ubiquitin ligase complex SCF subunit sconC (sconC) from Aspergillus flavus (strain ATCC 200026 / FGSC A1120 / IAM 13836 / NRRL 3357 / JCM 12722 / SRRC 167).